A 949-amino-acid chain; its full sequence is Glycine dehydrogenase (decarboxylating) (949 aa).

Lys-704 is modified (N6-(pyridoxal phosphate)lysine).

The protein belongs to the GcvP family. As to quaternary structure, the glycine cleavage system is composed of four proteins: P, T, L and H. It depends on pyridoxal 5'-phosphate as a cofactor.

It carries out the reaction N(6)-[(R)-lipoyl]-L-lysyl-[glycine-cleavage complex H protein] + glycine + H(+) = N(6)-[(R)-S(8)-aminomethyldihydrolipoyl]-L-lysyl-[glycine-cleavage complex H protein] + CO2. The glycine cleavage system catalyzes the degradation of glycine. The P protein binds the alpha-amino group of glycine through its pyridoxal phosphate cofactor; CO(2) is released and the remaining methylamine moiety is then transferred to the lipoamide cofactor of the H protein. The protein is Glycine dehydrogenase (decarboxylating) of Bacteroides fragilis (strain ATCC 25285 / DSM 2151 / CCUG 4856 / JCM 11019 / LMG 10263 / NCTC 9343 / Onslow / VPI 2553 / EN-2).